A 306-amino-acid chain; its full sequence is tRNA dimethylallyltransferase (306 aa).

9 to 16 (GPTGIGKT) serves as a coordination point for ATP. 11 to 16 (TGIGKT) contacts substrate. The interval 34–37 (DSMQ) is interaction with substrate tRNA.

The protein belongs to the IPP transferase family. As to quaternary structure, monomer. The cofactor is Mg(2+).

It catalyses the reaction adenosine(37) in tRNA + dimethylallyl diphosphate = N(6)-dimethylallyladenosine(37) in tRNA + diphosphate. In terms of biological role, catalyzes the transfer of a dimethylallyl group onto the adenine at position 37 in tRNAs that read codons beginning with uridine, leading to the formation of N6-(dimethylallyl)adenosine (i(6)A). The protein is tRNA dimethylallyltransferase of Lactobacillus johnsonii (strain CNCM I-12250 / La1 / NCC 533).